Reading from the N-terminus, the 327-residue chain is Methionyl-tRNA formyltransferase (327 aa).

Ser-121–Pro-124 provides a ligand contact to (6S)-5,6,7,8-tetrahydrofolate.

This sequence belongs to the Fmt family.

It carries out the reaction L-methionyl-tRNA(fMet) + (6R)-10-formyltetrahydrofolate = N-formyl-L-methionyl-tRNA(fMet) + (6S)-5,6,7,8-tetrahydrofolate + H(+). Its function is as follows. Attaches a formyl group to the free amino group of methionyl-tRNA(fMet). The formyl group appears to play a dual role in the initiator identity of N-formylmethionyl-tRNA by promoting its recognition by IF2 and preventing the misappropriation of this tRNA by the elongation apparatus. This Burkholderia mallei (strain ATCC 23344) protein is Methionyl-tRNA formyltransferase.